The chain runs to 115 residues: Large ribosomal subunit protein bL20 (115 aa).

It belongs to the bacterial ribosomal protein bL20 family.

Binds directly to 23S ribosomal RNA and is necessary for the in vitro assembly process of the 50S ribosomal subunit. It is not involved in the protein synthesizing functions of that subunit. In Prochlorococcus marinus (strain MIT 9313), this protein is Large ribosomal subunit protein bL20.